Consider the following 302-residue polypeptide: Bifunctional protein FolD (302 aa).

Residues 168 to 170 (GRS), threonine 197, and valine 238 each bind NADP(+).

The protein belongs to the tetrahydrofolate dehydrogenase/cyclohydrolase family. In terms of assembly, homodimer.

It carries out the reaction (6R)-5,10-methylene-5,6,7,8-tetrahydrofolate + NADP(+) = (6R)-5,10-methenyltetrahydrofolate + NADPH. It catalyses the reaction (6R)-5,10-methenyltetrahydrofolate + H2O = (6R)-10-formyltetrahydrofolate + H(+). It functions in the pathway one-carbon metabolism; tetrahydrofolate interconversion. Its function is as follows. Catalyzes the oxidation of 5,10-methylenetetrahydrofolate to 5,10-methenyltetrahydrofolate and then the hydrolysis of 5,10-methenyltetrahydrofolate to 10-formyltetrahydrofolate. The sequence is that of Bifunctional protein FolD from Desulfatibacillum aliphaticivorans.